A 270-amino-acid polypeptide reads, in one-letter code: Electron transfer flavoprotein subunit beta (270 aa).

Belongs to the ETF alpha-subunit/FixB family. In terms of assembly, heterodimer of an alpha and a beta subunit. It depends on FAD as a cofactor.

In terms of biological role, the electron transfer flavoprotein serves as a specific electron acceptor for other dehydrogenases. It transfers the electrons to the main respiratory chain via ETF-ubiquinone oxidoreductase (ETF dehydrogenase). In Megasphaera elsdenii, this protein is Electron transfer flavoprotein subunit beta (etfB).